The chain runs to 404 residues: MSFHRYRPRLPGGELAPMPWPVSLYRVLNHVAWPLEAESGRWTVFLDRLMIFLGFLVFCEHNEVDFHYLIANRQDMDNMLTGLPTYLILVEMQIRCFQLAWHKDRFRALLQRFYAEIYVSEEMEPHLFASIQRQMLATRVNSTVYLLALLNFFLVPVTNVIYHRREMLYKQVYPFDNTQLHFFIPLLVLNFWVGFIITSMLFGELNVMGELMMHLNARYIQLGQDLRRSAQMLLKKSSSLNVAIAYRLNLTHILRRNAALRDFGQRVEKEFTLRIFVMFAFSAGLLCALFFKAFTNPWGNVAYIVWFLAKFMELLALGMLGSILLKTTDELGMMYYTADWEQVIHQSDNVGENVKLMKLVTLAIQLNSRPFFITGLNYFRVSLTAVLKIIQGAFSYFTFLNSMR.

Over 1 to 38 (MSFHRYRPRLPGGELAPMPWPVSLYRVLNHVAWPLEAE) the chain is Cytoplasmic. Residues 39–59 (SGRWTVFLDRLMIFLGFLVFC) traverse the membrane as a helical segment. At 60–67 (EHNEVDFH) the chain is on the extracellular side. Residues 68 to 88 (YLIANRQDMDNMLTGLPTYLI) traverse the membrane as a helical segment. Residues 89–141 (LVEMQIRCFQLAWHKDRFRALLQRFYAEIYVSEEMEPHLFASIQRQMLATRVN) are Cytoplasmic-facing. The helical transmembrane segment at 142 to 162 (STVYLLALLNFFLVPVTNVIY) threads the bilayer. Residues 163 to 181 (HRREMLYKQVYPFDNTQLH) lie on the Extracellular side of the membrane. A helical membrane pass occupies residues 182–202 (FFIPLLVLNFWVGFIITSMLF). The Cytoplasmic portion of the chain corresponds to 203-274 (GELNVMGELM…QRVEKEFTLR (72 aa)). The helical transmembrane segment at 275–295 (IFVMFAFSAGLLCALFFKAFT) threads the bilayer. Over 296-303 (NPWGNVAY) the chain is Extracellular. The chain crosses the membrane as a helical span at residues 304–324 (IVWFLAKFMELLALGMLGSIL). Topologically, residues 325 to 380 (LKTTDELGMMYYTADWEQVIHQSDNVGENVKLMKLVTLAIQLNSRPFFITGLNYFR) are cytoplasmic. A helical transmembrane segment spans residues 381 to 401 (VSLTAVLKIIQGAFSYFTFLN). Topologically, residues 402–404 (SMR) are extracellular.

The protein belongs to the insect chemoreceptor superfamily. Heteromeric odorant receptor channel (TC 1.A.69) family. Or1a subfamily. In terms of assembly, interacts with Orco. Complexes exist early in the endomembrane system in olfactory sensory neurons (OSNs), coupling these complexes to the conserved ciliary trafficking pathway.

The protein resides in the cell membrane. In terms of biological role, odorant receptor which mediates acceptance or avoidance behavior, depending on its substrates. The odorant receptor repertoire encodes a large collection of odor stimuli that vary widely in identity, intensity, and duration. May form a complex with Orco to form odorant-sensing units, providing sensitive and prolonged odorant signaling and calcium permeability. Involved in the behavioral responses to octanol, anisole, and 2-heptanone. The sequence is that of Odorant receptor 74a (Or74a) from Drosophila melanogaster (Fruit fly).